Here is a 152-residue protein sequence, read N- to C-terminus: MAKRVQVVLTKNVNKLGKSGDLVEVAPGYARNYLLPQGIANIATPGILRQVEQRREKERQRLLAERQEAEARKTALQTIGRFVIRKQVGEGEAIFGTVTTQEVADVIKENTSQEIDRRGITLPEISKTGFYKAQVKLHPEVTAEIEIQVAPL.

Belongs to the bacterial ribosomal protein bL9 family.

Its function is as follows. Binds to the 23S rRNA. The chain is Large ribosomal subunit protein bL9 from Gloeothece citriformis (strain PCC 7424) (Cyanothece sp. (strain PCC 7424)).